Consider the following 69-residue polypeptide: Putative membrane protein insertion efficiency factor (69 aa).

The protein belongs to the UPF0161 family.

The protein localises to the cell membrane. In terms of biological role, could be involved in insertion of integral membrane proteins into the membrane. The chain is Putative membrane protein insertion efficiency factor from Desulfitobacterium hafniense (strain Y51).